The following is a 449-amino-acid chain: Glutamyl-tRNA(Gln) amidotransferase subunit A (449 aa).

Catalysis depends on charge relay system residues Lys51 and Ser126. A disordered region spans residues 103 to 128 (STTESSAHGKTLNPVDSSRVPGGSSG). Low complexity predominate over residues 119–128 (SSRVPGGSSG). The active-site Acyl-ester intermediate is the Ser150.

The protein belongs to the amidase family. GatA subfamily. Heterotrimer of A, B and C subunits.

It catalyses the reaction L-glutamyl-tRNA(Gln) + L-glutamine + ATP + H2O = L-glutaminyl-tRNA(Gln) + L-glutamate + ADP + phosphate + H(+). Functionally, allows the formation of correctly charged Gln-tRNA(Gln) through the transamidation of misacylated Glu-tRNA(Gln) in organisms which lack glutaminyl-tRNA synthetase. The reaction takes place in the presence of glutamine and ATP through an activated gamma-phospho-Glu-tRNA(Gln). This is Glutamyl-tRNA(Gln) amidotransferase subunit A from Wolinella succinogenes (strain ATCC 29543 / DSM 1740 / CCUG 13145 / JCM 31913 / LMG 7466 / NCTC 11488 / FDC 602W) (Vibrio succinogenes).